A 120-amino-acid chain; its full sequence is MRMNVFEMEGFLRGKCVPRDLKVNETNAEYLVRKFDALEAKCAALENKIIPVSAELPPANESVLLFDANGEGWLIGWRSLWYTWGQKETGEWQWTFQVGDLENVNITHWAVMPKAPEAGA.

This sequence to the N-terminal region of phage HK97/HK620 Gp37/hpaH.

This is an uncharacterized protein from Escherichia coli (strain K12).